The chain runs to 441 residues: Chitinase-like protein Idgf3 (441 aa).

Positions 1-23 are cleaved as a signal peptide; it reads MTGSLWLSLALSLAVLAQFKVSA. The GH18 domain maps to 25–441; that stretch reads PNLVCFYDSQ…MLRAIKYRLL (417 aa). Cys-29 and Cys-56 are joined by a disulfide. The N-linked (GlcNAc...) asparagine glycan is linked to Asn-221. Residues 307–331 are disordered; it reads KDSGDSGMPVVPSTQGPAPAGPQSK. A disulfide bridge links Cys-342 with Cys-425.

This sequence belongs to the glycosyl hydrolase 18 family. IDGF subfamily. Glycosylated. Primarily expressed in yolk cells and fat body. In larvae, it is expressed in small and large salivary gland cells, and weakly expressed in imaginal disks. Less expressed than Idgf2 and Idgf4.

The protein localises to the secreted. Its function is as follows. Cooperates with insulin-like peptides to stimulate the proliferation, polarization and motility of imaginal disk cells. May act by stabilizing the binding of insulin-like peptides to its receptor through a simultaneous interaction with both molecules to form a multiprotein signaling complex. This chain is Chitinase-like protein Idgf3 (Idgf3), found in Drosophila melanogaster (Fruit fly).